Here is a 607-residue protein sequence, read N- to C-terminus: Glutamyl-tRNA(Gln) amidotransferase subunit E (607 aa).

It belongs to the GatB/GatE family. GatE subfamily. Heterodimer of GatD and GatE.

It catalyses the reaction L-glutamyl-tRNA(Gln) + L-glutamine + ATP + H2O = L-glutaminyl-tRNA(Gln) + L-glutamate + ADP + phosphate + H(+). Functionally, allows the formation of correctly charged Gln-tRNA(Gln) through the transamidation of misacylated Glu-tRNA(Gln) in organisms which lack glutaminyl-tRNA synthetase. The reaction takes place in the presence of glutamine and ATP through an activated gamma-phospho-Glu-tRNA(Gln). The GatDE system is specific for glutamate and does not act on aspartate. The chain is Glutamyl-tRNA(Gln) amidotransferase subunit E from Pyrobaculum islandicum (strain DSM 4184 / JCM 9189 / GEO3).